We begin with the raw amino-acid sequence, 121 residues long: Small ribosomal subunit protein uS13 (121 aa).

A disordered region spans residues 94–121; that stretch reads DLPVRGQRTKTNARTRKGPRKSGVQLKK. Residues 100 to 121 are compositionally biased toward basic residues; sequence QRTKTNARTRKGPRKSGVQLKK.

It belongs to the universal ribosomal protein uS13 family. Part of the 30S ribosomal subunit. Forms a loose heterodimer with protein S19. Forms two bridges to the 50S subunit in the 70S ribosome.

Functionally, located at the top of the head of the 30S subunit, it contacts several helices of the 16S rRNA. In the 70S ribosome it contacts the 23S rRNA (bridge B1a) and protein L5 of the 50S subunit (bridge B1b), connecting the 2 subunits; these bridges are implicated in subunit movement. Contacts the tRNAs in the A and P-sites. The protein is Small ribosomal subunit protein uS13 of Polynucleobacter necessarius subsp. necessarius (strain STIR1).